Reading from the N-terminus, the 47-residue chain is Conotoxin Bu10 (47 aa).

The propeptide occupies 1–22 (DSRGTQLHRALRKATILSVSAR). 3 disulfide bridges follow: C23/C37, C30/C41, and C36/C46. Position 46 is a cysteine amide (C46).

The protein belongs to the conotoxin O1 superfamily. In terms of tissue distribution, expressed by the venom duct.

Its subcellular location is the secreted. The sequence is that of Conotoxin Bu10 from Conus bullatus (Bubble cone).